Here is a 185-residue protein sequence, read N- to C-terminus: MKMEIHKNLEEKMNKTINALKDELASIRAGRANPAMLDRIVVEYYGSPTPIKQIAAITAPEPRIISIQPYDGSALSSIEKAILQSDLGVNPSNDGKLIRIIVPQLTEERRKELTKVAKKTSEDAKVVLRNERRNANDRLKKMQKDNEITEDELKTAQDEVQKITDKFIKMVDELTEKKEKDIMEV.

It belongs to the RRF family.

Its subcellular location is the cytoplasm. Functionally, responsible for the release of ribosomes from messenger RNA at the termination of protein biosynthesis. May increase the efficiency of translation by recycling ribosomes from one round of translation to another. The protein is Ribosome-recycling factor of Alkaliphilus oremlandii (strain OhILAs) (Clostridium oremlandii (strain OhILAs)).